Here is a 505-residue protein sequence, read N- to C-terminus: Forkhead box protein O4 (505 aa).

Disordered regions lie at residues 1–66 (MDPE…HSEP), 175–244 (SSWW…SPCP), and 257–276 (RPRS…PMRP). Position 32 is a phosphothreonine; by PKB/AKT1 (Thr32). Residues 97-215 (RRNAWGNQSY…RGRSKGPKKK (119 aa)) form a required for interaction with FOXK1 region. The segment at residues 100–188 (AWGNQSYAEL…MLNPDGGKGG (89 aa)) is a DNA-binding region (fork-head). A Phosphoserine; by PKB/AKT1 modification is found at Ser197. Residues 205–216 (LRGRSKGPKKKP) show a composition bias toward basic residues. Residues 257 to 271 (RPRSSSNASTVSTRL) show a composition bias toward polar residues. At Ser262 the chain carries Phosphoserine; by PKB/AKT1.

In terms of assembly, interacts with CREBBP/CBP, MYOCD, SIRT1, SRF and YWHAZ. Acetylated by CREBBP/CBP and deacetylated by SIRT1. Binding of YWHAZ inhibits DNA-binding. Interacts with USP7; the interaction is enhanced in presence of hydrogen peroxide and occurs independently of TP53. Interacts with NLK, and this inhibits monoubiquitination and transcriptional activity. Interacts with FOXK1; the interaction inhibits MEF2C transactivation activity. In terms of processing, acetylation by CREBBP/CBP is induced by oxidative stress and inhibits transcriptional activity. Deacetylation by SIRT1 is NAD-dependent and stimulates transcriptional activity. Post-translationally, phosphorylation by PKB/AKT1 inhibits transcriptional activity and is responsible for cytoplasmic localization. May be phosphorylated at multiple sites by NLK. Monoubiquitinated; monoubiquitination is induced by oxidative stress and reduced by deacetylase inhibitors; results in its relocalization to the nucleus and its increased transcriptional activity. Deubiquitinated by USP7; deubiquitination is induced by oxidative stress; enhances its interaction with USP7 and consequently, deubiquitination; increases its translocation to the cytoplasm and inhibits its transcriptional activity. Hydrogene-peroxide-induced ubiquitination and USP7-mediated deubiquitination have no major effect on its protein stability. Strongly expressed in brown adipose tissue and weakly in white adipose tissue (at protein level). Expressed in skeletal muscle.

The protein localises to the cytoplasm. It is found in the nucleus. Functionally, transcription factor involved in the regulation of the insulin signaling pathway. Binds to insulin-response elements (IREs) and can activate transcription of IGFBP1. Down-regulates expression of HIF1A and suppresses hypoxia-induced transcriptional activation of HIF1A-modulated genes. Also involved in negative regulation of the cell cycle. Involved in increased proteasome activity in embryonic stem cells (ESCs) by activating expression of PSMD11 in ESCs, leading to enhanced assembly of the 26S proteasome, followed by higher proteasome activity. Represses smooth muscle cell differentiation by inhibiting the transcriptional coactivator activity of myocardin. This Mus musculus (Mouse) protein is Forkhead box protein O4 (Foxo4).